Reading from the N-terminus, the 25-residue chain is Caerin-2.2 (25 aa).

This sequence belongs to the frog skin active peptide (FSAP) family. Caerin subfamily. As to expression, expressed by the skin parotoid and/or rostral glands.

It is found in the secreted. Antimicrobial peptide, that adopts an alpha helical conformation which can disrupt bacterial membranes. Each caerin displays a different antimicrobial specificity. This Ranoidea caerulea (Green tree frog) protein is Caerin-2.2.